Here is a 661-residue protein sequence, read N- to C-terminus: Bifunctional polymyxin resistance protein ArnA (661 aa).

The tract at residues 1 to 304 is formyltransferase ArnAFT; sequence MKAVVFAYHD…ALGLVSGAVI (304 aa). The Proton donor; for formyltransferase activity role is filled by H104. (6R)-10-formyltetrahydrofolate contacts are provided by residues R114 and 136–140; that span reads VNRAD. The tract at residues 314-661 is dehydrogenase ArnADH; that stretch reads RRTRVLILGV…TVELVDDKNP (348 aa). NAD(+) is bound by residues D347 and 368–369; that span reads DI. UDP-alpha-D-glucuronate-binding positions include A393, Y398, and 432–433; that span reads TS. E434 (proton acceptor; for decarboxylase activity) is an active-site residue. UDP-alpha-D-glucuronate contacts are provided by residues R460, N492, 526–535, and Y613; that span reads KLIEGGKQKR. R619 serves as the catalytic Proton donor; for decarboxylase activity.

This sequence in the N-terminal section; belongs to the Fmt family. UDP-L-Ara4N formyltransferase subfamily. The protein in the C-terminal section; belongs to the NAD(P)-dependent epimerase/dehydratase family. UDP-glucuronic acid decarboxylase subfamily. As to quaternary structure, homohexamer, formed by a dimer of trimers.

It carries out the reaction UDP-alpha-D-glucuronate + NAD(+) = UDP-beta-L-threo-pentopyranos-4-ulose + CO2 + NADH. The catalysed reaction is UDP-4-amino-4-deoxy-beta-L-arabinose + (6R)-10-formyltetrahydrofolate = UDP-4-deoxy-4-formamido-beta-L-arabinose + (6S)-5,6,7,8-tetrahydrofolate + H(+). Its pathway is nucleotide-sugar biosynthesis; UDP-4-deoxy-4-formamido-beta-L-arabinose biosynthesis; UDP-4-deoxy-4-formamido-beta-L-arabinose from UDP-alpha-D-glucuronate: step 1/3. The protein operates within nucleotide-sugar biosynthesis; UDP-4-deoxy-4-formamido-beta-L-arabinose biosynthesis; UDP-4-deoxy-4-formamido-beta-L-arabinose from UDP-alpha-D-glucuronate: step 3/3. It participates in bacterial outer membrane biogenesis; lipopolysaccharide biosynthesis. Bifunctional enzyme that catalyzes the oxidative decarboxylation of UDP-glucuronic acid (UDP-GlcUA) to UDP-4-keto-arabinose (UDP-Ara4O) and the addition of a formyl group to UDP-4-amino-4-deoxy-L-arabinose (UDP-L-Ara4N) to form UDP-L-4-formamido-arabinose (UDP-L-Ara4FN). The modified arabinose is attached to lipid A and is required for resistance to polymyxin and cationic antimicrobial peptides. In Klebsiella pneumoniae subsp. pneumoniae (strain ATCC 700721 / MGH 78578), this protein is Bifunctional polymyxin resistance protein ArnA.